Reading from the N-terminus, the 127-residue chain is Protein SPIRAL1-like 4 (127 aa).

Residues 1–127 (MGKARGVNSG…FGSGPCGSDK (127 aa)) are disordered. The segment covering 39 to 48 (TTTTTTTTTT) has biased composition (low complexity). Phosphoserine is present on Ser-80. Residues 80 to 94 (SPNNYYRSDGQNCGN) show a composition bias toward polar residues.

It belongs to the SPIRAL1 family. As to expression, ubiquitous.

Its function is as follows. Acts redundantly with SPR1 in maintaining the cortical microtubules organization essential for anisotropic cell growth. The sequence is that of Protein SPIRAL1-like 4 (SP1L4) from Arabidopsis thaliana (Mouse-ear cress).